The chain runs to 93 residues: Integration host factor subunit beta (93 aa).

It belongs to the bacterial histone-like protein family. As to quaternary structure, heterodimer of an alpha and a beta chain.

This protein is one of the two subunits of integration host factor, a specific DNA-binding protein that functions in genetic recombination as well as in transcriptional and translational control. The chain is Integration host factor subunit beta from Cereibacter sphaeroides (strain KD131 / KCTC 12085) (Rhodobacter sphaeroides).